We begin with the raw amino-acid sequence, 383 residues long: Acetylornithine deacetylase (383 aa).

His-80 is a binding site for Zn(2+). Asp-82 is a catalytic residue. Asp-112 contacts Zn(2+). Glu-144 is an active-site residue. 3 residues coordinate Zn(2+): Glu-145, Glu-169, and His-355.

The protein belongs to the peptidase M20A family. ArgE subfamily. Homodimer. It depends on Zn(2+) as a cofactor. Co(2+) is required as a cofactor. The cofactor is glutathione.

It is found in the cytoplasm. It carries out the reaction N(2)-acetyl-L-ornithine + H2O = L-ornithine + acetate. It functions in the pathway amino-acid biosynthesis; L-arginine biosynthesis; L-ornithine from N(2)-acetyl-L-ornithine (linear): step 1/1. Catalyzes the hydrolysis of the amide bond of N(2)-acetylated L-amino acids. Cleaves the acetyl group from N-acetyl-L-ornithine to form L-ornithine, an intermediate in L-arginine biosynthesis pathway, and a branchpoint in the synthesis of polyamines. The chain is Acetylornithine deacetylase from Salmonella choleraesuis (strain SC-B67).